The sequence spans 431 residues: uncharacterized protein (431 aa).

The region spanning 1 to 258 (MPSQMREAIT…HGLIDLERAG (258 aa)) is the Peptidase S8 domain.

This sequence belongs to the peptidase S8 family.

This is an uncharacterized protein from Sinorhizobium fredii (strain NBRC 101917 / NGR234).